A 348-amino-acid polypeptide reads, in one-letter code: Phosphate acyltransferase (348 aa).

It belongs to the PlsX family. In terms of assembly, homodimer. Probably interacts with PlsY.

Its subcellular location is the cytoplasm. The catalysed reaction is a fatty acyl-[ACP] + phosphate = an acyl phosphate + holo-[ACP]. The protein operates within lipid metabolism; phospholipid metabolism. Catalyzes the reversible formation of acyl-phosphate (acyl-PO(4)) from acyl-[acyl-carrier-protein] (acyl-ACP). This enzyme utilizes acyl-ACP as fatty acyl donor, but not acyl-CoA. The chain is Phosphate acyltransferase from Lactiplantibacillus plantarum (strain ATCC BAA-793 / NCIMB 8826 / WCFS1) (Lactobacillus plantarum).